Reading from the N-terminus, the 463-residue chain is L-seryl-tRNA(Sec) selenium transferase (463 aa).

At Lys-295 the chain carries N6-(pyridoxal phosphate)lysine.

The protein belongs to the SelA family. As to quaternary structure, homodecamer; pentamer of dimers. Binds only one seryl-tRNA(Sec) per dimer. Requires pyridoxal 5'-phosphate as cofactor.

Its subcellular location is the cytoplasm. The catalysed reaction is L-seryl-tRNA(Sec) + selenophosphate + H(+) = L-selenocysteinyl-tRNA(Sec) + phosphate. The protein operates within aminoacyl-tRNA biosynthesis; selenocysteinyl-tRNA(Sec) biosynthesis; selenocysteinyl-tRNA(Sec) from L-seryl-tRNA(Sec) (bacterial route): step 1/1. Its function is as follows. Converts seryl-tRNA(Sec) to selenocysteinyl-tRNA(Sec) required for selenoprotein biosynthesis. The protein is L-seryl-tRNA(Sec) selenium transferase of Salmonella enteritidis PT4 (strain P125109).